Here is a 1208-residue protein sequence, read N- to C-terminus: Defective chorion protein, FC125 isoform (1208 aa).

An N-terminal signal peptide occupies residues 1-19 (MRLFSLLPLLALLVVQAAG). 3 disordered regions span residues 23–60 (VTSDDPATDAGSTTNSTTDTKPRIPSQDEILGQMPSIN), 184–212 (APAPAPAAAPPPAPAPAADPPAAPVPDAP), and 268–294 (PAQPAAAGTDAQASDISEVRVRPEDPY). Residues 32–41 (AGSTTNSTTD) are compositionally biased toward polar residues. The segment covering 268–280 (PAQPAAAGTDAQA) has biased composition (low complexity). Tandem repeats lie at residues 493–518 (QNPMMMQQRQWSEEQAKIQQNQQQIQ), 519–544 (QNPMMMQQRQWSEEQAKIQQNQQQIQ), 545–570 (QNPMMMQQRQWSEEQAKIQQNQQQIQ), 571–596 (QNPMMMQQRQWSEEQAKIQQNQQQIQ), and 597–622 (QNPMMVQQRQWSEEQAKIQQNQQQIQ). A 12 X 26 AA approximate tandem repeats, Glu, Met-rich region spans residues 493-788 (QNPMMMQQRQ…IQQQQRQMMQ (296 aa)). A 6; approximate repeat occupies 623 to 652 (QNPMMMQQRQWSEEQAKIQHDQQMAQQMAQ). Residues 653-680 (QGLMMTEQRQRQWSEDQAKIQQAQQMAQ) form a 7; approximate repeat. One copy of the 8; approximate repeat lies at 681-696 (QTPMMMPQMQQRQWTE). Residues 697 to 720 (DPQMVQQMQQRQWAEDQTRMQMAQ) form a 9; approximate repeat. A 10; approximate repeat occupies 721 to 733 (QNPMMQQQRQMAE). The stretch at 734–758 (NPQMMQQRQWSEEQTKIEQAQQMAQ) is one 11; approximate repeat. One copy of the 12; approximate repeat lies at 759-788 (QNQMMMQQMQQRQWSEDQAQIQQQQRQMMQ). Residues 828 to 839 (EDEDNKAEDDLV) are compositionally biased toward acidic residues. Disordered stretches follow at residues 828–875 (EDED…SKSA), 944–1010 (RTIN…GSIF), and 1114–1208 (VQPP…DVDD). A compositionally biased stretch (polar residues) spans 957–977 (SESQKSNSNPPTTLTPAPQEQ). Composition is skewed to acidic residues over residues 1163–1178 (PEPDEEDDRDVEEPSE) and 1194–1208 (NDIDYFNFDDDDVDD).

It is found in the secreted. Functionally, required for proper assembly of the eggshell. The polypeptide is Defective chorion protein, FC125 isoform (Drosophila melanogaster (Fruit fly)).